The primary structure comprises 1396 residues: uncharacterized protein (1396 aa).

An ATP-binding site is contributed by 88–95 (AYKKWGRS). Disordered regions lie at residues 146–165 (EKIH…LSPT) and 198–388 (KPCS…VKDL). Low complexity predominate over residues 198 to 221 (KPCSYSSSSSSSTVPPASTDTSSP). Over residues 242 to 268 (MHEKAQSRSRHEKESKLSSSTIEEKPA) the composition is skewed to basic and acidic residues. Residues 286-300 (SWSSGSSEAGSSSSG) show a composition bias toward low complexity. Residues 312-327 (VKVRHKAREIRNRKGR) show a composition bias toward basic residues. 2 positions are modified to phosphoserine: Ser-817 and Ser-1083. Residues 1113 to 1137 (PISASELSPGGGSESEFESEKDEAS) are disordered. Residues Ser-1197 and Ser-1339 each carry the phosphoserine modification. The segment at 1347–1396 (TGERGSETKPNGLHRKMCSSASSDTGDTGSEAGGEWVGPSREELFSRTHL) is disordered. A compositionally biased stretch (low complexity) spans 1365 to 1376 (SSASSDTGDTGS). Residues 1386–1396 (SREELFSRTHL) show a composition bias toward basic and acidic residues.

This is an uncharacterized protein from Mus musculus (Mouse).